The chain runs to 225 residues: PKHD-type hydroxylase YbiX (225 aa).

Residues 78 to 177 form the Fe2OG dioxygenase domain; sequence TLSTPLFNRY…RVASFMWIQS (100 aa). The Fe cation site is built by His96, Asp98, and His158. Arg168 is a binding site for 2-oxoglutarate.

It depends on Fe(2+) as a cofactor. The cofactor is L-ascorbate.

The sequence is that of PKHD-type hydroxylase YbiX from Escherichia coli O8 (strain IAI1).